Here is a 161-residue protein sequence, read N- to C-terminus: Spermidine N(1)-acetyltransferase (161 aa).

Positions 3–160 constitute an N-acetyltransferase domain; the sequence is IEIRKLSIED…SDFIMEKKYE (158 aa). Residues 92-94, 99-104, asparagine 131, and serine 136 contribute to the acetyl-CoA site; these read LYL and THKKIG. Catalysis depends on tyrosine 138, which acts as the Proton donor. Lysine 140 provides a ligand contact to acetyl-CoA.

The protein belongs to the acetyltransferase family. Monomer or homodimer.

The enzyme catalyses an alkane-alpha,omega-diamine + acetyl-CoA = an N-acetylalkane-alpha,omega-diamine + CoA + H(+). Involved in the protection against polyamine toxicity by regulating their concentration. Could also be involved in the negative control of sporulation as well as production of degradative enzymes such as alpha-amylase, levansucrase and alkaline phosphatase. Catalyzes the transfer of an acetyl group from acetyl coenzyme A (AcCoA) to an acceptor substrate and release both CoA and the acetylated product. It can use a variety of substrates including spermidine, L-tryptophan, L-leucine, L-lysine, dopamine and tyramine. The chain is Spermidine N(1)-acetyltransferase from Thermoplasma acidophilum (strain ATCC 25905 / DSM 1728 / JCM 9062 / NBRC 15155 / AMRC-C165).